Here is a 693-residue protein sequence, read N- to C-terminus: Triadin (693 aa).

Residues 1–47 lie on the Cytoplasmic side of the membrane; the sequence is MTEITAEGNASTTTTVIDNKNGCIPKSPGKVLKRSVTEDIVTTFSSP. Residues 48–68 traverse the membrane as a helical segment; the sequence is AAWLLVIALIITWSAVAIVMF. At 69 to 693 the chain is on the lumenal side; the sequence is DLVDYKNFSA…NSPGQKQQEQ (625 aa). Residues 117 to 130 show a composition bias toward acidic residues; sequence EGDEDDEDADEDID. 3 disordered regions span residues 117–260, 278–649, and 666–693; these read EGDE…AVHE, GDLK…QTRP, and FQFPVTPVQQPGENPGKTNSPGQKQQEQ. 2 stretches are compositionally biased toward basic and acidic residues: residues 131 to 241 and 249 to 260; these read KGEI…KETP and KKDDKEMPAVHE. The residue at position 301 (serine 301) is a Phosphoserine. Residues 305-352 show a composition bias toward basic and acidic residues; it reads LEEKEKEEKKKMEKKDTSDTKKKEKEVKKKSEETTIDGKGKEPGKPPE. Positions 354 to 364 are enriched in polar residues; that stretch reads KQMTAKLTTQA. Basic and acidic residues-rich tracts occupy residues 366–427 and 438–502; these read ARKD…KEEI and GKKE…KEAK. The N-linked (GlcNAc...) asparagine glycan is linked to asparagine 515. Composition is skewed to basic and acidic residues over residues 526–547 and 558–579; these read VKPEKAEHQEKGHPSIKKDKPK and DSGKKKIEKSEKESKVPTREEN. Asparagine 584 is a glycosylation site (N-linked (GlcNAc...) asparagine). Over residues 587–637 the composition is skewed to basic and acidic residues; that stretch reads KAEKPGKIPKDSKEAPASKKDKEDSKEAPTSKKDKEDSKDVPHSKKDKEVT. Polar residues predominate over residues 672 to 693; sequence PVQQPGENPGKTNSPGQKQQEQ.

Homooligomer of variable subunit number; disulfide-linked. Interacts with CASQ1 and RYR1 in skeletal muscle. Interacts with CASQ2. Post-translationally, phosphorylated by CaMK2. In terms of processing, N-glycosylated. Detected in heart (at protein level). Detected in heart.

It is found in the sarcoplasmic reticulum membrane. Its function is as follows. Contributes to the regulation of lumenal Ca2+ release via the sarcoplasmic reticulum calcium release channels RYR1 and RYR2, a key step in triggering skeletal and heart muscle contraction. Required for normal organization of the triad junction, where T-tubules and the sarcoplasmic reticulum terminal cisternae are in close contact. Required for normal skeletal muscle strength. Plays a role in excitation-contraction coupling in the heart and in regulating the rate of heart beats. The protein is Triadin of Mus musculus (Mouse).